The following is a 395-amino-acid chain: ATP synthase subunit beta, chloroplastic (395 aa).

Glycine 72–threonine 79 contributes to the ATP binding site.

It belongs to the ATPase alpha/beta chains family. F-type ATPases have 2 components, CF(1) - the catalytic core - and CF(0) - the membrane proton channel. CF(1) has five subunits: alpha(3), beta(3), gamma(1), delta(1), epsilon(1). CF(0) has four main subunits: a(1), b(1), b'(1) and c(9-12).

It localises to the plastid. It is found in the chloroplast thylakoid membrane. It carries out the reaction ATP + H2O + 4 H(+)(in) = ADP + phosphate + 5 H(+)(out). Produces ATP from ADP in the presence of a proton gradient across the membrane. The catalytic sites are hosted primarily by the beta subunits. The sequence is that of ATP synthase subunit beta, chloroplastic from Microlepia platyphylla (Plate fern).